Reading from the N-terminus, the 60-residue chain is MAVPKKKTSKSRRDMRRAHHALVNVTGAECPNCGEVKLPHHVCGSCGHYDGREVVAQAEA.

It belongs to the bacterial ribosomal protein bL32 family.

In Paramagnetospirillum magneticum (strain ATCC 700264 / AMB-1) (Magnetospirillum magneticum), this protein is Large ribosomal subunit protein bL32.